Here is a 77-residue protein sequence, read N- to C-terminus: U11-lycotoxin-Ls1d (77 aa).

An N-terminal signal peptide occupies residues 1–20 (MKLIIFTGLVLFAIVSLIEA). Positions 21-26 (EEESGR) are excised as a propeptide.

Belongs to the neurotoxin 19 (CSTX) family. 10 (U11-Lctx) subfamily. In terms of processing, contains 4 disulfide bonds. As to expression, expressed by the venom gland.

Its subcellular location is the secreted. The chain is U11-lycotoxin-Ls1d from Lycosa singoriensis (Wolf spider).